The primary structure comprises 72 residues: Translation initiation factor IF-1 (72 aa).

The S1-like domain maps to 1-72 (MAKSDVIEVD…DKGRITYRYK (72 aa)).

The protein belongs to the IF-1 family. Component of the 30S ribosomal translation pre-initiation complex which assembles on the 30S ribosome in the order IF-2 and IF-3, IF-1 and N-formylmethionyl-tRNA(fMet); mRNA recruitment can occur at any time during PIC assembly.

Its subcellular location is the cytoplasm. Its function is as follows. One of the essential components for the initiation of protein synthesis. Stabilizes the binding of IF-2 and IF-3 on the 30S subunit to which N-formylmethionyl-tRNA(fMet) subsequently binds. Helps modulate mRNA selection, yielding the 30S pre-initiation complex (PIC). Upon addition of the 50S ribosomal subunit IF-1, IF-2 and IF-3 are released leaving the mature 70S translation initiation complex. The sequence is that of Translation initiation factor IF-1 from Sulfurimonas denitrificans (strain ATCC 33889 / DSM 1251) (Thiomicrospira denitrificans (strain ATCC 33889 / DSM 1251)).